The following is a 378-amino-acid chain: Putative dioxygenase VC_1345 (378 aa).

Fe cation is bound by residues H288, D294, and H324.

The protein belongs to the homogentisate dioxygenase family. The cofactor is Fe cation.

The protein is Putative dioxygenase VC_1345 of Vibrio cholerae serotype O1 (strain ATCC 39315 / El Tor Inaba N16961).